A 382-amino-acid polypeptide reads, in one-letter code: Alanine racemase (382 aa).

The active-site Proton acceptor; specific for D-alanine is the K39. K39 carries the N6-(pyridoxal phosphate)lysine modification. Substrate is bound at residue R138. Catalysis depends on Y265, which acts as the Proton acceptor; specific for L-alanine. M312 serves as a coordination point for substrate.

This sequence belongs to the alanine racemase family. The cofactor is pyridoxal 5'-phosphate.

It catalyses the reaction L-alanine = D-alanine. Its pathway is amino-acid biosynthesis; D-alanine biosynthesis; D-alanine from L-alanine: step 1/1. Its function is as follows. Catalyzes the interconversion of L-alanine and D-alanine. May also act on other amino acids. This chain is Alanine racemase (alr), found in Staphylococcus saprophyticus subsp. saprophyticus (strain ATCC 15305 / DSM 20229 / NCIMB 8711 / NCTC 7292 / S-41).